A 534-amino-acid polypeptide reads, in one-letter code: Probable alkaline/neutral invertase D (534 aa).

Residues Ser7 and Ser37 each carry the phosphoserine modification. A Phosphothreonine modification is found at Thr55. Ser532 carries the post-translational modification Phosphoserine.

This sequence belongs to the glycosyl hydrolase 100 family.

It carries out the reaction Hydrolysis of terminal non-reducing beta-D-fructofuranoside residues in beta-D-fructofuranosides.. Functionally, invertase that cleaves sucrose into glucose and fructose. The sequence is that of Probable alkaline/neutral invertase D from Arabidopsis thaliana (Mouse-ear cress).